The primary structure comprises 443 residues: Serine/threonine-protein phosphatase 2A 55 kDa regulatory subunit B beta isoform (443 aa).

4 WD repeats span residues Thr-22–Val-61, Glu-87–Glu-128, Ala-171–Asn-209, and Glu-220–Arg-260. A Phosphoserine modification is found at Ser-275. 3 WD repeats span residues Glu-279–Glu-317, Glu-334–Leu-375, and Asp-410–Val-442. Position 295 is a phosphotyrosine (Tyr-295). Thr-298 is modified (phosphothreonine).

Belongs to the phosphatase 2A regulatory subunit B family. PP2A consists of a common heterodimeric core enzyme, composed of a 36 kDa catalytic subunit (subunit C) and a 65 kDa constant regulatory subunit (PR65 or subunit A), that associates with a variety of regulatory subunits. Proteins that associate with the core dimer include three families of regulatory subunits B (the R2/B/PR55/B55, R3/B''/PR72/PR130/PR59 and R5/B'/B56 families), the 48 kDa variable regulatory subunit, viral proteins, and cell signaling molecules. Interacts with TOMM22. Interacts with IER5 (via N- and C-terminal regions).

It is found in the cytoplasm. The protein localises to the cytoskeleton. It localises to the membrane. Its function is as follows. The B regulatory subunit might modulate substrate selectivity and catalytic activity, and might also direct the localization of the catalytic enzyme to a particular subcellular compartment. The polypeptide is Serine/threonine-protein phosphatase 2A 55 kDa regulatory subunit B beta isoform (PPP2R2B) (Bos taurus (Bovine)).